Here is a 502-residue protein sequence, read N- to C-terminus: Glycerol kinase (502 aa).

Residue Thr13 participates in ADP binding. Residues Thr13, Thr14, and Ser15 each coordinate ATP. A sn-glycerol 3-phosphate-binding site is contributed by Thr13. Position 17 (Arg17) interacts with ADP. Residues Arg83, Glu84, Tyr136, and Asp246 each contribute to the sn-glycerol 3-phosphate site. Glycerol is bound by residues Arg83, Glu84, Tyr136, Asp246, and Gln247. ADP contacts are provided by Thr268 and Gly311. Positions 268, 311, 315, and 412 each coordinate ATP. Gly412 and Asn416 together coordinate ADP.

Belongs to the FGGY kinase family.

It carries out the reaction glycerol + ATP = sn-glycerol 3-phosphate + ADP + H(+). It participates in polyol metabolism; glycerol degradation via glycerol kinase pathway; sn-glycerol 3-phosphate from glycerol: step 1/1. Inhibited by fructose 1,6-bisphosphate (FBP). Its function is as follows. Key enzyme in the regulation of glycerol uptake and metabolism. Catalyzes the phosphorylation of glycerol to yield sn-glycerol 3-phosphate. This is Glycerol kinase from Francisella tularensis subsp. holarctica (strain FTNF002-00 / FTA).